Reading from the N-terminus, the 83-residue chain is Sulfur carrier protein TusA (83 aa).

The active-site Cysteine persulfide intermediate is C20.

This sequence belongs to the sulfur carrier protein TusA family.

It localises to the cytoplasm. Its function is as follows. Sulfur carrier protein which probably makes part of a sulfur-relay system. In Pseudomonas fluorescens (strain SBW25), this protein is Sulfur carrier protein TusA.